Consider the following 647-residue polypeptide: Leucine aminopeptidase 2 (647 aa).

Substrate contacts are provided by residues 169–171 (QCQ) and 295–300 (PYGGME). Residue His-324 participates in Zn(2+) binding. The Proton acceptor role is filled by Glu-325. Residues His-328 and Glu-347 each contribute to the Zn(2+) site. Tyr-418 acts as the Proton donor in catalysis.

The protein belongs to the peptidase M1 family. Zn(2+) serves as cofactor.

The protein localises to the cytoplasm. Its subcellular location is the nucleus. It catalyses the reaction an epoxide + H2O = an ethanediol. Its function is as follows. Aminopeptidase that preferentially cleaves di- and tripeptides. Also has low epoxide hydrolase activity (in vitro). Can hydrolyze the epoxide leukotriene LTA(4) but it forms preferentially 5,6-dihydroxy-7,9,11,14-eicosatetraenoic acid rather than the cytokine leukotriene B(4) as the product compared to the homologous mammalian enzyme (in vitro). The chain is Leucine aminopeptidase 2 from Yarrowia lipolytica (strain CLIB 122 / E 150) (Yeast).